We begin with the raw amino-acid sequence, 73 residues long: Putative neurotoxin NaH-Cpp1a (73 aa).

The first 23 residues, Met1–Ser23, serve as a signal peptide directing secretion. 3 cysteine pairs are disulfide-bonded: Cys43–Cys58, Cys50–Cys63, and Cys57–Cys70.

Expressed outside of acontia.

Its subcellular location is the secreted. The protein localises to the nematocyst. Putative neurotoxin. The protein is Putative neurotoxin NaH-Cpp1a of Calliactis polypus (Hermit crab anemone).